A 320-amino-acid polypeptide reads, in one-letter code: Mitochondrial ribosome-associated GTPase 1 (320 aa).

The region spanning 37 to 209 (LKQMRASPRK…LLDTPGVLPP (173 aa)) is the CP-type G domain. GTP is bound by residues 81 to 84 (NKMD), 153 to 158 (NVGKSS), and glycine 205.

The protein belongs to the TRAFAC class YlqF/YawG GTPase family. MTG1 subfamily.

The protein localises to the mitochondrion inner membrane. Functionally, plays a role in the regulation of the mitochondrial ribosome assembly and of translational activity. Displays mitochondrial GTPase activity. The chain is Mitochondrial ribosome-associated GTPase 1 from Ictalurus punctatus (Channel catfish).